Reading from the N-terminus, the 299-residue chain is Peroxisomal biogenesis factor 19 (299 aa).

The segment at 1-63 is disordered; the sequence is MAAAEEGCSV…SPGDTAKDAL (63 aa). At alanine 2 the chain carries N-acetylalanine. The segment at 2 to 56 is docking to the peroxisome membrane and binding to PEX3; it reads AAAEEGCSVGAEADRELEELLESALDDFDKAKPSPAPPSTTTAPDASGPQKRSPG. The tract at residues 2–91 is necessary for PEX19 function on peroxisome biogenesis; the sequence is AAAEEGCSVG…QATAEFEKAM (90 aa). The span at 16–27 shows a compositional bias: acidic residues; that stretch reads RELEELLESALD. 3 positions are modified to phosphoserine: serine 35, serine 54, and serine 66. Threonine 236 is subject to Phosphothreonine. Cysteine 296 carries the post-translational modification Cysteine methyl ester. A lipid anchor (S-farnesyl cysteine) is attached at cysteine 296. A propeptide spans 297–299 (removed in mature form); the sequence is LIM.

This sequence belongs to the peroxin-19 family. In terms of assembly, interacts with a broad range of peroxisomal membrane proteins, including PEX3, PEX10, PEX11A, PEX11B, PEX12, PEX13, PEX14 and PEX16, PXMP2/PMP22, PXMP4/PMP24, SLC25A17/PMP34, ABCD1/ALDP, ABCD2/ALDRP, and ABCD3/PMP70. Also interacts with the tumor suppressor CDKN2A/p19ARF. As to quaternary structure, (Microbial infection) Interacts with human cytomegalovirus protein UL37 isoform vMIA; this interaction inhibits the peroxisomal-dependent antiviral signaling. As to expression, ubiquitously expressed. Isoform 1 is strongly predominant in all tissues except in utero where isoform 2 is the main form.

The protein localises to the cytoplasm. The protein resides in the peroxisome membrane. Functionally, necessary for early peroxisomal biogenesis. Acts both as a cytosolic chaperone and as an import receptor for peroxisomal membrane proteins (PMPs). Binds and stabilizes newly synthesized PMPs in the cytoplasm by interacting with their hydrophobic membrane-spanning domains, and targets them to the peroxisome membrane by binding to the integral membrane protein PEX3. Excludes CDKN2A from the nucleus and prevents its interaction with MDM2, which results in active degradation of TP53. The protein is Peroxisomal biogenesis factor 19 of Homo sapiens (Human).